Consider the following 209-residue polypeptide: UPF0174 protein jhp_1493 (209 aa).

This sequence belongs to the UPF0174 family.

In Helicobacter pylori (strain J99 / ATCC 700824) (Campylobacter pylori J99), this protein is UPF0174 protein jhp_1493.